The sequence spans 369 residues: Phosphatidylglycerol--prolipoprotein diacylglyceryl transferase (369 aa).

Helical transmembrane passes span 26–46 (YYGI…ILTL), 60–80 (YVFI…FIIG), and 97–117 (LAIQ…FFFI). An a 1,2-diacyl-sn-glycero-3-phospho-(1'-sn-glycerol)-binding site is contributed by arginine 167. The next 2 helical transmembrane spans lie at 216 to 236 (VPIF…IVFL) and 273 to 293 (FVTS…GFIF).

This sequence belongs to the Lgt family.

The protein resides in the cell membrane. The enzyme catalyses L-cysteinyl-[prolipoprotein] + a 1,2-diacyl-sn-glycero-3-phospho-(1'-sn-glycerol) = an S-1,2-diacyl-sn-glyceryl-L-cysteinyl-[prolipoprotein] + sn-glycerol 1-phosphate + H(+). It participates in protein modification; lipoprotein biosynthesis (diacylglyceryl transfer). Its function is as follows. Catalyzes the transfer of the diacylglyceryl group from phosphatidylglycerol to the sulfhydryl group of the N-terminal cysteine of a prolipoprotein, the first step in the formation of mature lipoproteins. This Mycoplasmoides gallisepticum (strain R(low / passage 15 / clone 2)) (Mycoplasma gallisepticum) protein is Phosphatidylglycerol--prolipoprotein diacylglyceryl transferase.